The chain runs to 821 residues: Frameshifted structural polyprotein (821 aa).

Residues 1-106 (MNRGFFNMLG…KPKPGKRQRM (106 aa)) form a disordered region. The span at 38 to 49 (LASQIQQLTTAV) shows a compositional bias: polar residues. A compositionally biased stretch (basic residues) spans 67–106 (PPPRQKKQAPKQPPKPKKPKTQEKKKKQPAKPKPGKRQRM). The interval 93-101 (KQPAKPKPG) is ribosome-binding. The Peptidase S3 domain maps to 114-264 (RLFDVKNEDG…KTTPEGTEEW (151 aa)). Catalysis depends on charge relay system residues H141, D163, and S215. A functions as an uncleaved signal peptide for the precursor of protein E3/E2 region spans residues 265–279 (SAAPLVTAMCLLGNV). The N-linked (GlcNAc...) asparagine; by host glycan is linked to N278. C283 and C289 are joined by a disulfide. Residues N524 and N646 are each glycosylated (N-linked (GlcNAc...) asparagine; by host). Residues 696–716 (ILAVASATVAMMIGVTVAVLC) traverse the membrane as a helical segment. S-palmitoyl cysteine; by host attachment occurs at residues C724, C744, and C745. A run of 2 helical transmembrane segments spans residues 726–746 (TPYA…LCCV) and 764–784 (NSQP…IVLM).

This sequence belongs to the alphavirus frameshifted structural polyprotein family. As to quaternary structure, homomultimer. Interacts with host karyopherin KPNA4; this interaction allows the nuclear import of the viral capsid protein. Interacts with spike glycoprotein E2. Interacts with host IRAK1; the interaction leads to inhibition of IRAK1-dependent signaling. In terms of assembly, the precursor of protein E3/E2 and E1 form a heterodimer shortly after synthesis. Processing of the precursor of protein E3/E2 into E2 and E3 results in a heterodimer of the spike glycoproteins E2 and E1. Spike at virion surface are constituted of three E2-E1 heterodimers. Specific enzymatic cleavages in vivo yield mature proteins. Capsid protein is auto-cleaved during polyprotein translation, unmasking a signal peptide at the N-terminus of the precursor of E3/E2. The remaining polyprotein is then targeted to the host endoplasmic reticulum, where host signal peptidase cleaves it into pE2 and TF. pE2 is further processed to mature E3 and E2 by host furin in trans-Golgi vesicle. In terms of processing, palmitoylated via thioester bonds. These palmitoylations may induce disruption of the C-terminus transmembrane. This would result in the reorientation of E2 C-terminus from lumenal to cytoplasmic side. Post-translationally, palmitoylated via thioester bonds.

Its subcellular location is the virion. The protein localises to the host cytoplasm. The protein resides in the host cell membrane. It localises to the host nucleus. It is found in the virion membrane. The catalysed reaction is Autocatalytic release of the core protein from the N-terminus of the togavirus structural polyprotein by hydrolysis of a -Trp-|-Ser- bond.. Functionally, forms an icosahedral capsid with a T=4 symmetry composed of 240 copies of the capsid protein surrounded by a lipid membrane through which penetrate 80 spikes composed of trimers of E1-E2 heterodimers. The capsid protein binds to the viral RNA genome at a site adjacent to a ribosome binding site for viral genome translation following genome release. Possesses a protease activity that results in its autocatalytic cleavage from the nascent structural protein. Following its self-cleavage, the capsid protein transiently associates with ribosomes, and within several minutes the protein binds to viral RNA and rapidly assembles into icosahedric core particles. The resulting nucleocapsid eventually associates with the cytoplasmic domain of the spike glycoprotein E2 at the cell membrane, leading to budding and formation of mature virions. In case of infection, new virions attach to target cells and after clathrin-mediated endocytosis their membrane fuses with the host endosomal membrane. This leads to the release of the nucleocapsid into the cytoplasm, followed by an uncoating event necessary for the genomic RNA to become accessible. The uncoating might be triggered by the interaction of capsid proteins with ribosomes. Binding of ribosomes would release the genomic RNA since the same region is genomic RNA-binding and ribosome-binding. Specifically inhibits interleukin-1 receptor-associated kinase 1/IRAK1-dependent signaling during viral entry, representing a means by which the alphaviruses may evade innate immune detection and activation prior to viral gene expression. Its function is as follows. Provides the signal sequence for the translocation of the precursor of protein E3/E2 to the host endoplasmic reticulum. Furin-cleaved E3 remains associated with spike glycoprotein E1 and mediates pH protection of the latter during the transport via the secretory pathway. After virion release from the host cell, the assembly protein E3 is gradually released in the extracellular space. Plays an essential role in viral attachment to target host cell, by binding to the cell receptor. Synthesized as a pE2 precursor which is processed by furin at the cell membrane just before virion budding, giving rise to E2-E1 heterodimer. The pE2-E1 heterodimer is stable, whereas E2-E1 is unstable and dissociate at low pH. pE2 is processed at the last step, presumably to avoid E1 fusion activation before its final export to cell surface. E2 C-terminus contains a transitory transmembrane that would be disrupted by palmitoylation, resulting in reorientation of the C-terminal tail from lumenal to cytoplasmic side. This step is critical since E2 C-terminus is involved in budding by interacting with capsid proteins. This release of E2 C-terminus in cytoplasm occurs lately in protein export, and precludes premature assembly of particles at the endoplasmic reticulum membrane. In terms of biological role, plays a role in viral assembly and release. This Sindbis virus (SINV) protein is Frameshifted structural polyprotein.